A 487-amino-acid polypeptide reads, in one-letter code: WRKY transcription factor 1 (487 aa).

The disordered stretch occupies residues 69 to 104 (QSEVDVASPVSEKAPKVSESSGALSLQSGSEGNSPF). Position 76 is a phosphoserine (serine 76). The span at 86–101 (SESSGALSLQSGSEGN) shows a compositional bias: polar residues. A DNA-binding region (WRKY 1) is located at residues 105–169 (IREKVMEDGY…YFGEHDHPKP (65 aa)). 4 residues coordinate Zn(2+): cysteine 136, cysteine 141, histidine 164, and histidine 166. The segment at 255-287 (SSRITGDNTHKDYNSPTAKRRKKGGNIELSPVE) is disordered. The short motif at 273-277 (KRRKK) is the Nuclear localization signal element. Positions 301–366 (TLFDIVNDGY…YEGKHDHDMP (66 aa)) form a DNA-binding region, WRKY 2. 4 residues coordinate Zn(2+): cysteine 332, cysteine 337, histidine 361, and histidine 363. Positions 380–487 (EVDDKEGDAN…QKPKTEPAQS (108 aa)) are disordered. Polar residues predominate over residues 390-401 (KTPQSSTLQSIT). Basic and acidic residues-rich tracts occupy residues 429 to 462 (LDEKLKEEIKERSDANKDHAANHAKPEAKSDDKT) and 476 to 487 (EEQKPKTEPAQS).

Belongs to the WRKY group I family. In terms of tissue distribution, expressed to similar levels in root and flower, to a somewhat lower level in stem and to low levels in leaf and siliques.

It is found in the nucleus. Its function is as follows. Transcription factor. Binds to a 5'-CGTTGACCGAG-3' consensus core sequence which contains a W box, a frequently occurring elicitor-responsive cis-acting element. This is WRKY transcription factor 1 from Arabidopsis thaliana (Mouse-ear cress).